Consider the following 150-residue polypeptide: UPF0756 membrane protein NT05HA_0561 (150 aa).

A run of 4 helical transmembrane segments spans residues 1 to 21 (MSLQ…LGIF), 52 to 72 (YGLS…LVSG), 81 to 101 (AFVS…AWLA), and 128 to 148 (FLGG…VLIG).

It belongs to the UPF0756 family.

Its subcellular location is the cell membrane. This is UPF0756 membrane protein NT05HA_0561 from Aggregatibacter aphrophilus (strain NJ8700) (Haemophilus aphrophilus).